The sequence spans 299 residues: Nicotinate-nucleotide pyrophosphorylase [carboxylating] (299 aa).

An important for hexamer formation region spans residues 8-12 (HLLPP). Quinolinate-binding positions include R102, 138–139 (RK), 160–161 (HR), K171, E201, D222, 248–250 (SGG), and G270. A Phosphothreonine modification is found at T291.

It belongs to the NadC/ModD family. As to quaternary structure, hexamer formed by 3 homodimers.

The catalysed reaction is nicotinate beta-D-ribonucleotide + CO2 + diphosphate = quinolinate + 5-phospho-alpha-D-ribose 1-diphosphate + 2 H(+). It participates in cofactor biosynthesis; NAD(+) biosynthesis; nicotinate D-ribonucleotide from quinolinate: step 1/1. In terms of biological role, involved in the catabolism of quinolinic acid (QA). This Bos taurus (Bovine) protein is Nicotinate-nucleotide pyrophosphorylase [carboxylating] (QPRT).